The following is a 335-amino-acid chain: MATKVVLDFEKPLFELEEKLNEMRVCLKQSSGEHNLSETESLSREIEVLESKVDALRHAIYKNLTRWQKVQLARHPERPFTLDYIYMMMQDFVELSGDRHYGDDKALIGGFARIEDEERDFSQTVMVIGHQKGRDTKSNLYRNFGMSQPEGYRKALRLMKLAEKFNKPVVTLIDTPGAYPGIKAEELGQAEAIARNLFEMAGLRVPVICVIIGEGASGGAIGIGVGNRILMAENAWYSVISPESCSSILWRSWKFKEQAAEALKLTAEDLLEQKIVDRIIPEPLGGAHHDPEKMADTVKSLLVEELRMLLEKNPDDLVNERIEKFAAMGVWNEEE.

Residues 48–308 form the CoA carboxyltransferase C-terminal domain; that stretch reads VLESKVDALR…KSLLVEELRM (261 aa).

This sequence belongs to the AccA family. As to quaternary structure, acetyl-CoA carboxylase is a heterohexamer composed of biotin carboxyl carrier protein (AccB), biotin carboxylase (AccC) and two subunits each of ACCase subunit alpha (AccA) and ACCase subunit beta (AccD).

It is found in the cytoplasm. The enzyme catalyses N(6)-carboxybiotinyl-L-lysyl-[protein] + acetyl-CoA = N(6)-biotinyl-L-lysyl-[protein] + malonyl-CoA. It participates in lipid metabolism; malonyl-CoA biosynthesis; malonyl-CoA from acetyl-CoA: step 1/1. Functionally, component of the acetyl coenzyme A carboxylase (ACC) complex. First, biotin carboxylase catalyzes the carboxylation of biotin on its carrier protein (BCCP) and then the CO(2) group is transferred by the carboxyltransferase to acetyl-CoA to form malonyl-CoA. This chain is Acetyl-coenzyme A carboxylase carboxyl transferase subunit alpha, found in Chlorobium phaeobacteroides (strain BS1).